Consider the following 51-residue polypeptide: MSKNKPLGRKLRLARALKSNSPVPAWVIIKTNGKFRYNFHRRDWRRNDLKV.

The protein belongs to the eukaryotic ribosomal protein eL39 family.

This is Large ribosomal subunit protein eL39 from Sulfurisphaera tokodaii (strain DSM 16993 / JCM 10545 / NBRC 100140 / 7) (Sulfolobus tokodaii).